Here is a 67-residue protein sequence, read N- to C-terminus: Large ribosomal subunit protein bL35 (67 aa).

This sequence belongs to the bacterial ribosomal protein bL35 family.

This chain is Large ribosomal subunit protein bL35, found in Acidiphilium cryptum (strain JF-5).